We begin with the raw amino-acid sequence, 252 residues long: Large ribosomal subunit protein uL3 (252 aa).

An N5-methylglutamine modification is found at glutamine 169.

This sequence belongs to the universal ribosomal protein uL3 family. In terms of assembly, part of the 50S ribosomal subunit. Forms a cluster with proteins L14 and L19. Post-translationally, methylated by PrmB.

One of the primary rRNA binding proteins, it binds directly near the 3'-end of the 23S rRNA, where it nucleates assembly of the 50S subunit. The chain is Large ribosomal subunit protein uL3 from Hyphomonas neptunium (strain ATCC 15444).